The sequence spans 152 residues: Xanthine-guanine phosphoribosyltransferase (152 aa).

Residues 37-38 (RG), arginine 69, and 88-96 (DDLVDTGGT) contribute to the 5-phospho-alpha-D-ribose 1-diphosphate site. Arginine 69 is a binding site for GMP. Aspartate 89 is a Mg(2+) binding site. Residues aspartate 92 and isoleucine 135 each contribute to the guanine site. Xanthine is bound by residues aspartate 92 and isoleucine 135. GMP contacts are provided by residues 92–96 (DTGGT) and 134–135 (WI).

The protein belongs to the purine/pyrimidine phosphoribosyltransferase family. XGPT subfamily. Homotetramer. Mg(2+) serves as cofactor.

The protein localises to the cell inner membrane. It carries out the reaction GMP + diphosphate = guanine + 5-phospho-alpha-D-ribose 1-diphosphate. It catalyses the reaction XMP + diphosphate = xanthine + 5-phospho-alpha-D-ribose 1-diphosphate. The enzyme catalyses IMP + diphosphate = hypoxanthine + 5-phospho-alpha-D-ribose 1-diphosphate. Its pathway is purine metabolism; GMP biosynthesis via salvage pathway; GMP from guanine: step 1/1. The protein operates within purine metabolism; XMP biosynthesis via salvage pathway; XMP from xanthine: step 1/1. Purine salvage pathway enzyme that catalyzes the transfer of the ribosyl-5-phosphate group from 5-phospho-alpha-D-ribose 1-diphosphate (PRPP) to the N9 position of the 6-oxopurines guanine and xanthine to form the corresponding ribonucleotides GMP (guanosine 5'-monophosphate) and XMP (xanthosine 5'-monophosphate), with the release of PPi. To a lesser extent, also acts on hypoxanthine. This Escherichia coli O7:K1 (strain IAI39 / ExPEC) protein is Xanthine-guanine phosphoribosyltransferase.